We begin with the raw amino-acid sequence, 154 residues long: Nuclear cap-binding protein subunit 2 (154 aa).

Residues Y10, Y33, 102-106, 113-117, and 123-124 each bind mRNA; these read RVDWD, RQYGR, and QV. One can recognise an RRM domain in the interval 30–108; that stretch reads CTLYVGNLSF…RLIRVDWDAG (79 aa).

Belongs to the RRM NCBP2 family. As to quaternary structure, component of the nuclear cap-binding complex (CBC), a heterodimer composed of Cbp80 and Cbp20 that interacts with m7GpppG-capped RNA. Interacts with Ars2.

The protein resides in the nucleus. In terms of biological role, component of the cap-binding complex (CBC), which binds co-transcriptionally to the 5' cap of pre-mRNAs and is involved in various processes such as pre-mRNA splicing and RNA-mediated gene silencing (RNAi). The CBC complex is involved in miRNA-mediated RNA interference via its interaction with Ars2 and is required for primary microRNAs (miRNAs) processing. Also involved in innate immunity via the short interfering RNAs (siRNAs) processing machinery by restricting the viral RNA production. In the CBC complex, Cbp20 recognizes and binds capped RNAs (m7GpppG-capped RNA) but requires Cbp80 to stabilize the movement of its N-terminal loop and lock the CBC into a high affinity cap-binding state with the cap structure. The polypeptide is Nuclear cap-binding protein subunit 2 (Cbp20) (Drosophila melanogaster (Fruit fly)).